The following is a 466-amino-acid chain: MKNLVIFAFLFLSITTVINGGITSKFVRQALPSIEMSLDTFPSPGGYNTPEQVHLTQGDHDGRGMIVSWVTPLNLAGSNVVTYWIATNGSDVKPAKKRAHASTKSYRFYDYSSGFLHHATIKGLEYDTKYIYEVGTDKSVRQFSFTTPPKIGPDVPYTFGIIGDLGQTYASNETLYHYMSNPKGQAVLFAGDLSYADDHPNHDQRKWDTWGRFMEPCAAYQPFIFAAGNHEIDFVPNIGEPHAFKPYTHRYPNAYKASQSTSPLWYSVRRASAHIIVLSSYSAYGKYTPQYIWLEQELKNVNREETPWLIVIVHSPWYNSNNYHYMEGESMRVMFESWLVNSKVDLVLSGHVHAYERSERISNIKYNITNGLSSPVKDPNAPIYITIGDGGNIEGIANSFVDPQPSYSAYREASFGHAVLEIMNRTHAQYTWHRNQDNEPVAADSIMLHNRHFFPVEEIVSSNIRA.

The signal sequence occupies residues 1 to 20 (MKNLVIFAFLFLSITTVING). N-linked (GlcNAc...) asparagine glycosylation is present at Asn-88. Residue Asp-164 coordinates Fe cation. A glycan (N-linked (GlcNAc...) asparagine) is linked at Asn-172. Positions 192 and 195 each coordinate Fe cation. Position 192 (Asp-192) interacts with Zn(2+). 2 residues coordinate Zn(2+): Asn-229 and His-314. A substrate-binding site is contributed by Asn-229. His-324 serves as the catalytic Proton donor. His-351 serves as a coordination point for Zn(2+). 351–353 (HVH) lines the substrate pocket. His-353 provides a ligand contact to Fe cation. N-linked (GlcNAc...) asparagine glycans are attached at residues Asn-367 and Asn-424.

The protein belongs to the metallophosphoesterase superfamily. Purple acid phosphatase family. Homodimer. It depends on Fe cation as a cofactor. Zn(2+) is required as a cofactor. Specifically expressed in flowers.

The protein localises to the secreted. The enzyme catalyses a phosphate monoester + H2O = an alcohol + phosphate. This Arabidopsis thaliana (Mouse-ear cress) protein is Purple acid phosphatase 6 (PAP6).